The chain runs to 939 residues: Valine--tRNA ligase (939 aa).

The 'HIGH' region motif lies at 47-57 (PNVTGILHMGH). The 'KMSKS' region motif lies at 563 to 567 (KLSKS). An ATP-binding site is contributed by Lys-566. Residues 873–939 (AEHLAKEHAR…QSILDKIASL (67 aa)) are a coiled coil.

The protein belongs to the class-I aminoacyl-tRNA synthetase family. ValS type 1 subfamily. As to quaternary structure, monomer.

The protein resides in the cytoplasm. The enzyme catalyses tRNA(Val) + L-valine + ATP = L-valyl-tRNA(Val) + AMP + diphosphate. Functionally, catalyzes the attachment of valine to tRNA(Val). As ValRS can inadvertently accommodate and process structurally similar amino acids such as threonine, to avoid such errors, it has a 'posttransfer' editing activity that hydrolyzes mischarged Thr-tRNA(Val) in a tRNA-dependent manner. In Chlamydia muridarum (strain MoPn / Nigg), this protein is Valine--tRNA ligase.